Here is a 266-residue protein sequence, read N- to C-terminus: Probable dihydroorotate dehydrogenase B (NAD(+)), electron transfer subunit (266 aa).

An FAD-binding FR-type domain is found at 5-99 (NVPEVLEIKR…RGPYGRGFEL (95 aa)). [2Fe-2S] cluster is bound by residues C217, C222, C225, and C235.

This sequence belongs to the PyrK family. As to quaternary structure, heterotetramer of 2 PyrK and 2 PyrD type B subunits. [2Fe-2S] cluster serves as cofactor. Requires FAD as cofactor.

It participates in pyrimidine metabolism; UMP biosynthesis via de novo pathway; orotate from (S)-dihydroorotate (NAD(+) route): step 1/1. Its function is as follows. Responsible for channeling the electrons from the oxidation of dihydroorotate from the FMN redox center in the PyrD type B subunit to the ultimate electron acceptor NAD(+). In Methanothermobacter thermautotrophicus (strain ATCC 29096 / DSM 1053 / JCM 10044 / NBRC 100330 / Delta H) (Methanobacterium thermoautotrophicum), this protein is Probable dihydroorotate dehydrogenase B (NAD(+)), electron transfer subunit.